Consider the following 533-residue polypeptide: Ribonuclease Y (533 aa).

The interval 16 to 41 is disordered; sequence VERIRRRAEQDAAEQTERVRREAEQI. A compositionally biased stretch (basic and acidic residues) spans 22-41; the sequence is RAEQDAAEQTERVRREAEQI. The 67-residue stretch at 223-289 folds into the KH domain; it reads VVSVLHLPSD…RITLTALVSD (67 aa). Positions 349–442 constitute an HD domain; the sequence is VLAHLVESAH…TQAADQISGG (94 aa).

Belongs to the RNase Y family.

Its function is as follows. Endoribonuclease that initiates mRNA decay. The chain is Ribonuclease Y from Parafrankia sp. (strain EAN1pec).